A 290-amino-acid chain; its full sequence is Pre-mRNA-splicing factor cwf20 (290 aa).

Disordered stretches follow at residues 1–61 (MSLV…KSSF) and 114–134 (PNNS…KKST). The span at 114-128 (PNNSVSDLTSTGSSE) shows a compositional bias: polar residues.

In terms of assembly, belongs to the 40S cdc5-associated complex (or cwf complex), a spliceosome sub-complex reminiscent of a late-stage spliceosome composed of the U2, U5 and U6 snRNAs and at least brr2, cdc5, cwf2/prp3, cwf3/syf1, cwf4/syf3, cwf5/ecm2, spp42/cwf6, cwf7/spf27, cwf8, cwf9, cwf10, cwf11, cwf12, prp45/cwf13, cwf14, cwf15, cwf16, cwf17, cwf18, cwf19, cwf20, cwf21, cwf22, cwf23, cwf24, cwf25, cwf26, cyp7/cwf27, cwf28, cwf29/ist3, lea1, msl1, prp5/cwf1, prp10, prp12/sap130, prp17, prp22, sap61, sap62, sap114, sap145, slu7, smb1, smd1, smd3, smf1, smg1 and syf2.

It is found in the nucleus. Its function is as follows. Involved in mRNA splicing where it associates with cdc5 and the other cwf proteins as part of the spliceosome. The chain is Pre-mRNA-splicing factor cwf20 (cwf20) from Schizosaccharomyces pombe (strain 972 / ATCC 24843) (Fission yeast).